The primary structure comprises 116 residues: UPF0499 protein ATEG_06693 (116 aa).

An N-terminal signal peptide occupies residues 1–18 (MKLTGLLSLALLTTLALA). 3 disulfides stabilise this stretch: C32–C46, C36–C49, and C42–C54.

Belongs to the UPF0499 family.

The protein localises to the secreted. This is UPF0499 protein ATEG_06693 from Aspergillus terreus (strain NIH 2624 / FGSC A1156).